Reading from the N-terminus, the 309-residue chain is Protein-L-isoaspartate O-methyltransferase 2 (309 aa).

The short motif at 23–28 (KKRKKK) is the Nuclear localization signal element. S144 is an active-site residue.

It belongs to the methyltransferase superfamily. L-isoaspartyl/D-aspartyl protein methyltransferase family. Expressed in rosette leaves, stems, cauline leaves, flowers and developing seeds.

The protein resides in the nucleus. It catalyses the reaction [protein]-L-isoaspartate + S-adenosyl-L-methionine = [protein]-L-isoaspartate alpha-methyl ester + S-adenosyl-L-homocysteine. Functionally, catalyzes the methyl esterification of L-isoaspartyl residues in peptides and proteins that result from spontaneous decomposition of normal L-aspartyl and L-asparaginyl residues. It plays a role in the repair and/or degradation of damaged proteins. The sequence is that of Protein-L-isoaspartate O-methyltransferase 2 (PIMT2) from Arabidopsis thaliana (Mouse-ear cress).